Here is a 391-residue protein sequence, read N- to C-terminus: Heme A synthase (391 aa).

A run of 8 helical transmembrane segments spans residues Ile37 to Leu57, Arg121 to Ala141, Leu152 to Ser172, Leu186 to Leu206, Thr229 to Ile249, Phe298 to Gly318, Leu332 to Ala352, and Trp354 to Ala374. His300 contacts heme. His360 contacts heme.

This sequence belongs to the COX15/CtaA family. Type 2 subfamily. Interacts with CtaB. Heme b serves as cofactor.

Its subcellular location is the cell membrane. The catalysed reaction is Fe(II)-heme o + 2 A + H2O = Fe(II)-heme a + 2 AH2. The protein operates within porphyrin-containing compound metabolism; heme A biosynthesis; heme A from heme O: step 1/1. Catalyzes the conversion of heme O to heme A by two successive hydroxylations of the methyl group at C8. The first hydroxylation forms heme I, the second hydroxylation results in an unstable dihydroxymethyl group, which spontaneously dehydrates, resulting in the formyl group of heme A. In Cereibacter sphaeroides (strain ATCC 17029 / ATH 2.4.9) (Rhodobacter sphaeroides), this protein is Heme A synthase.